Reading from the N-terminus, the 305-residue chain is UDP-3-O-acyl-N-acetylglucosamine deacetylase (305 aa).

Zn(2+) contacts are provided by His-78, His-237, and Asp-241. Residue His-264 is the Proton donor of the active site.

Belongs to the LpxC family. Zn(2+) serves as cofactor.

The enzyme catalyses a UDP-3-O-[(3R)-3-hydroxyacyl]-N-acetyl-alpha-D-glucosamine + H2O = a UDP-3-O-[(3R)-3-hydroxyacyl]-alpha-D-glucosamine + acetate. It functions in the pathway glycolipid biosynthesis; lipid IV(A) biosynthesis; lipid IV(A) from (3R)-3-hydroxytetradecanoyl-[acyl-carrier-protein] and UDP-N-acetyl-alpha-D-glucosamine: step 2/6. In terms of biological role, catalyzes the hydrolysis of UDP-3-O-myristoyl-N-acetylglucosamine to form UDP-3-O-myristoylglucosamine and acetate, the committed step in lipid A biosynthesis. The sequence is that of UDP-3-O-acyl-N-acetylglucosamine deacetylase from Cupriavidus pinatubonensis (strain JMP 134 / LMG 1197) (Cupriavidus necator (strain JMP 134)).